The following is a 214-amino-acid chain: Probable transaldolase (214 aa).

Lys83 acts as the Schiff-base intermediate with substrate in catalysis.

This sequence belongs to the transaldolase family. Type 3B subfamily.

The protein localises to the cytoplasm. The catalysed reaction is D-sedoheptulose 7-phosphate + D-glyceraldehyde 3-phosphate = D-erythrose 4-phosphate + beta-D-fructose 6-phosphate. Its pathway is carbohydrate degradation; pentose phosphate pathway; D-glyceraldehyde 3-phosphate and beta-D-fructose 6-phosphate from D-ribose 5-phosphate and D-xylulose 5-phosphate (non-oxidative stage): step 2/3. In terms of biological role, transaldolase is important for the balance of metabolites in the pentose-phosphate pathway. The protein is Probable transaldolase of Geobacter sp. (strain M21).